Reading from the N-terminus, the 326-residue chain is Putative [LysW]-lysine/[LysW]-ornithine hydrolase (326 aa).

Position 66 (His-66) interacts with Zn(2+). The active site involves Asp-68. Asp-90 provides a ligand contact to Zn(2+). Glu-117 acts as the Proton acceptor in catalysis. Residues Glu-118, Glu-139, and His-297 each coordinate Zn(2+).

Belongs to the peptidase M20A family. LysK subfamily. Requires Zn(2+) as cofactor. The cofactor is Co(2+).

It localises to the cytoplasm. It carries out the reaction [amino-group carrier protein]-C-terminal-gamma-(L-lysyl)-L-glutamate + H2O = [amino-group carrier protein]-C-terminal-L-glutamate + L-lysine. The catalysed reaction is [amino-group carrier protein]-C-terminal-gamma-(L-ornithyl)-L-glutamate + H2O = [amino-group carrier protein]-C-terminal-L-glutamate + L-ornithine. The protein operates within amino-acid biosynthesis; L-lysine biosynthesis via AAA pathway; L-lysine from L-alpha-aminoadipate (Thermus route): step 5/5. It participates in amino-acid biosynthesis; L-arginine biosynthesis. Functionally, catalyzes the release of L-lysine from [LysW]-gamma-L-lysine and the release of L-ornithine from [LysW]-L-ornithine. This chain is Putative [LysW]-lysine/[LysW]-ornithine hydrolase, found in Pyrococcus furiosus (strain ATCC 43587 / DSM 3638 / JCM 8422 / Vc1).